A 468-amino-acid chain; its full sequence is 3-isopropylmalate dehydratase large subunit (468 aa).

[4Fe-4S] cluster is bound by residues cysteine 347, cysteine 407, and cysteine 410.

This sequence belongs to the aconitase/IPM isomerase family. LeuC type 1 subfamily. In terms of assembly, heterodimer of LeuC and LeuD. It depends on [4Fe-4S] cluster as a cofactor.

The catalysed reaction is (2R,3S)-3-isopropylmalate = (2S)-2-isopropylmalate. Its pathway is amino-acid biosynthesis; L-leucine biosynthesis; L-leucine from 3-methyl-2-oxobutanoate: step 2/4. Functionally, catalyzes the isomerization between 2-isopropylmalate and 3-isopropylmalate, via the formation of 2-isopropylmaleate. The chain is 3-isopropylmalate dehydratase large subunit from Campylobacter jejuni subsp. jejuni serotype O:6 (strain 81116 / NCTC 11828).